The chain runs to 264 residues: Proteasome subunit beta type-4 (264 aa).

Met1 is subject to N-acetylmethionine. Residues 1-45 constitute a propeptide that is removed on maturation; sequence MEAFLGSRSGLWAGGPAPGQFYRIPSTPDSFMDPASALYRGPITR. Ser26 is modified (phosphoserine). Phosphotyrosine is present on Tyr102.

This sequence belongs to the peptidase T1B family. In terms of assembly, the 26S proteasome consists of a 20S proteasome core and two 19S regulatory subunits. The 20S proteasome core is a barrel-shaped complex made of 28 subunits that are arranged in four stacked rings. The two outer rings are each formed by seven alpha subunits, and the two inner rings are formed by seven beta subunits. The proteolytic activity is exerted by three beta-subunits PSMB5, PSMB6 and PSMB7. Forms a ternary complex with SMAD1 and OAZ1 before PSMB4 is incorporated into the 20S proteasome. Interacts with PRPF19. (Microbial infection) Interacts with HTLV-1 Tax protein. As to quaternary structure, (Microbial infection) Interacts with HIV-1 Nef and Tat proteins.

It is found in the cytoplasm. The protein localises to the nucleus. Non-catalytic component of the 20S core proteasome complex involved in the proteolytic degradation of most intracellular proteins. This complex plays numerous essential roles within the cell by associating with different regulatory particles. Associated with two 19S regulatory particles, forms the 26S proteasome and thus participates in the ATP-dependent degradation of ubiquitinated proteins. The 26S proteasome plays a key role in the maintenance of protein homeostasis by removing misfolded or damaged proteins that could impair cellular functions, and by removing proteins whose functions are no longer required. Associated with the PA200 or PA28, the 20S proteasome mediates ubiquitin-independent protein degradation. This type of proteolysis is required in several pathways including spermatogenesis (20S-PA200 complex) or generation of a subset of MHC class I-presented antigenic peptides (20S-PA28 complex). SMAD1/OAZ1/PSMB4 complex mediates the degradation of the CREBBP/EP300 repressor SNIP1. This is Proteasome subunit beta type-4 from Homo sapiens (Human).